Here is an 878-residue protein sequence, read N- to C-terminus: Alanine--tRNA ligase (878 aa).

The Zn(2+) site is built by histidine 558, histidine 562, cysteine 663, and histidine 667.

The protein belongs to the class-II aminoacyl-tRNA synthetase family. It depends on Zn(2+) as a cofactor.

The protein localises to the cytoplasm. The enzyme catalyses tRNA(Ala) + L-alanine + ATP = L-alanyl-tRNA(Ala) + AMP + diphosphate. Catalyzes the attachment of alanine to tRNA(Ala) in a two-step reaction: alanine is first activated by ATP to form Ala-AMP and then transferred to the acceptor end of tRNA(Ala). Also edits incorrectly charged Ser-tRNA(Ala) and Gly-tRNA(Ala) via its editing domain. This chain is Alanine--tRNA ligase, found in Mycoplasmopsis synoviae (strain 53) (Mycoplasma synoviae).